The primary structure comprises 65 residues: Conotoxin mr5.1b (65 aa).

The first 19 residues, 1–19 (MRCVPVFVILLLLIASAPS), serve as a signal peptide directing secretion. Positions 20 to 48 (VDARLKTKDDMPLPSSHANIKRTLQMLRN) are excised as a propeptide. 4-carboxyglutamate is present on Glu-60.

The protein belongs to the conotoxin T superfamily. Contains 2 disulfide bonds that can be either 'C1-C3, C2-C4' or 'C1-C4, C2-C3', since these disulfide connectivities have been observed for conotoxins with cysteine framework V (for examples, see AC P0DQQ7 and AC P81755). Expressed by the venom duct.

It is found in the secreted. This Conus marmoreus (Marble cone) protein is Conotoxin mr5.1b.